Reading from the N-terminus, the 737-residue chain is Delta and Notch-like epidermal growth factor-related receptor (737 aa).

Positions 1–25 are cleaved as a signal peptide; the sequence is MPPRRAQAPGAPLLPVLALLPLLLG. Residues 26 to 640 lie on the Extracellular side of the membrane; it reads AGPQSGCLAS…LTNMPRHSLY (615 aa). EGF-like domains follow at residues 44–92 and 94–133; these read APGP…TYCQ and VADP…LNCE. Positions 44–133 are interaction with NOTCH1; sequence APGPCASQPC…NDGYEGLNCE (90 aa). 6 disulfide bridges follow: Cys-48-Cys-59, Cys-53-Cys-80, Cys-82-Cys-91, Cys-98-Cys-108, Cys-103-Cys-121, and Cys-123-Cys-132. A glycan (N-linked (GlcNAc...) asparagine) is linked at Asn-204. 5 EGF-like domains span residues 309–348, 349–390, 392–428, 430–466, and 468–503; these read PGDS…TFCE, EFDA…ELCQ, KIDY…SACE, KVDP…PTCA, and LVDF…LYCE. Cystine bridges form between Cys-319–Cys-336, Cys-338–Cys-347, Cys-353–Cys-364, Cys-358–Cys-378, Cys-380–Cys-389, Cys-396–Cys-407, Cys-401–Cys-416, Cys-418–Cys-427, Cys-434–Cys-445, Cys-439–Cys-454, Cys-456–Cys-465, Cys-472–Cys-482, Cys-477–Cys-491, Cys-493–Cys-502, Cys-509–Cys-520, Cys-514–Cys-529, Cys-531–Cys-540, Cys-547–Cys-558, Cys-552–Cys-567, Cys-569–Cys-578, Cys-585–Cys-596, Cys-590–Cys-605, and Cys-607–Cys-616. The EGF-like 8; calcium-binding domain maps to 505 to 541; sequence EYNECLSAPCLNAATCRDLINGYECVCLAEYKGTHCE. The EGF-like 9 domain maps to 543–579; the sequence is YKDPCANISCLNGGTCDSEGLNGTCICAPGFTGEECD. Residue Asn-564 is glycosylated (N-linked (GlcNAc...) asparagine). Residues 581–617 form the EGF-like 10; calcium-binding domain; that stretch reads DINECDSNPCHHAGTCLDQPNGYTCHCPHGWVGANCE. Residues 641-661 form a helical membrane-spanning segment; the sequence is IIIGALCVAFILMLIILIVGI. At 662-737 the chain is on the cytoplasmic side; that stretch reads CRISRIEYQG…LVTLIKTKDL (76 aa). Residues 677 to 680 are interaction with AP1G1 and somatodendritic targeting; sequence YEEF. Ser-685 is modified (phosphoserine). At Tyr-711 the chain carries Phosphotyrosine. Thr-714 bears the Phosphothreonine mark. Tyr-721 bears the Phosphotyrosine mark. Ser-722 is modified (phosphoserine).

In terms of assembly, interacts with AP1G1. Interacts with NOTCH1. Post-translationally, N-glycosylated. In terms of tissue distribution, specifically expressed in brain neurons (at protein level).

The protein localises to the cell membrane. Functionally, mediates neuron-glia interaction during astrocytogenesis. May promote differentiation of Bergmann glia during cerebellar development by activating DELTEX-dependent NOTCH1 signaling. This chain is Delta and Notch-like epidermal growth factor-related receptor (Dner), found in Mus musculus (Mouse).